The sequence spans 171 residues: MLP-like protein 31 (171 aa).

The protein belongs to the MLP family.

This Arabidopsis thaliana (Mouse-ear cress) protein is MLP-like protein 31 (MLP31).